Here is a 1173-residue protein sequence, read N- to C-terminus: Clustered mitochondria protein homolog (1173 aa).

Low complexity predominate over residues 1 to 21 (MSTIDLPTSSLPGSSGDPSGT). Positions 1–25 (MSTIDLPTSSLPGSSGDPSGTEMSH) are disordered. One can recognise a Clu domain in the interval 316–565 (VPHRADLSRT…SLFPLDAQFL (250 aa)). The disordered stretch occupies residues 888–910 (KFTGKKGNKKKRNLGKSQNTTNR). Over residues 890–901 (TGKKGNKKKRNL) the composition is skewed to basic residues. A TPR repeat occupies 984–1017 (ARAYCQLAMIYHQLEKKEEAVELARKAVIVCERF).

It belongs to the CLU family. In terms of assembly, may associate with the eukaryotic translation initiation factor 3 (eIF-3) complex.

It localises to the cytoplasm. MRNA-binding protein involved in proper cytoplasmic distribution of mitochondria. The chain is Clustered mitochondria protein homolog from Schizosaccharomyces pombe (strain 972 / ATCC 24843) (Fission yeast).